The sequence spans 717 residues: uncharacterized protein (717 aa).

The chain crosses the membrane as a helical span at residues 19–38 (VFLSTIFVSIIFCLGILFLV).

The protein to E.coli YtfN.

The protein resides in the membrane. This is an uncharacterized protein from Buchnera aphidicola subsp. Baizongia pistaciae (strain Bp).